Consider the following 251-residue polypeptide: NADPH-dependent oxidoreductase (251 aa).

Belongs to the flavin oxidoreductase frp family. FMN serves as cofactor.

Functionally, reduces FMN, organic nitro compounds and disulfide DTNB. Involved in maintenance of the cellular redox state and the disulfide stress response. This chain is NADPH-dependent oxidoreductase (nfrA), found in Staphylococcus epidermidis (strain ATCC 12228 / FDA PCI 1200).